The sequence spans 476 residues: Angiotensinogen (476 aa).

The N-terminal stretch at 1–24 is a signal peptide; it reads MAPAGLSLGATILCLLAWAGLAAG. Residues Cys42 and Cys161 are joined by a disulfide bond. The segment at 45–64 is disordered; that stretch reads LEKPSVETPADPTLTPVPIQ. A glycan (N-linked (GlcNAc...) asparagine) is linked at Asn295.

It belongs to the serpin family. Post-translationally, in response to low blood pressure, the enzyme renin/REN cleaves angiotensinogen to produce angiotensin-1. Angiotensin-1 is a substrate of ACE (angiotensin converting enzyme) that removes a dipeptide to yield the physiologically active peptide angiotensin-2. Angiotensin-1 and angiotensin-2 can be further processed to generate angiotensin-3, angiotensin-4. Angiotensin 1-9 is cleaved from angiotensin-1 by ACE2 and can be further processed by ACE to produce angiotensin 1-7, angiotensin 1-5 and angiotensin 1-4. Angiotensin 1-7 has also been proposed to be cleaved from angiotensin-2 by ACE2 or from angiotensin-1 by MME (neprilysin). In terms of processing, the disulfide bond is labile. Angiotensinogen is present in the circulation in a near 40:60 ratio with the oxidized disulfide-bonded form, which preferentially interacts with receptor-bound renin.

It is found in the secreted. In terms of biological role, essential component of the renin-angiotensin system (RAS), a potent regulator of blood pressure, body fluid and electrolyte homeostasis. Its function is as follows. Acts directly on vascular smooth muscle as a potent vasoconstrictor, affects cardiac contractility and heart rate through its action on the sympathetic nervous system, and alters renal sodium and water absorption through its ability to stimulate the zona glomerulosa cells of the adrenal cortex to synthesize and secrete aldosterone. Acts by binding to angiotensin receptors AGTR1 and AGTR2. Also binds the DEAR/FBXW7-AS1 receptor. Functionally, stimulates aldosterone release. Is a ligand for the G-protein coupled receptor MAS1. Has vasodilator and antidiuretic effects. Has an antithrombotic effect that involves MAS1-mediated release of nitric oxide from platelets. The chain is Angiotensinogen (AGT) from Ovis aries (Sheep).